Consider the following 197-residue polypeptide: dCTP deaminase (197 aa).

DCTP contacts are provided by residues 110–115 (RSSLAR), D128, 136–138 (VLE), Y171, and Q182. E138 serves as the catalytic Proton donor/acceptor.

This sequence belongs to the dCTP deaminase family. In terms of assembly, homotrimer.

The catalysed reaction is dCTP + H2O + H(+) = dUTP + NH4(+). It participates in pyrimidine metabolism; dUMP biosynthesis; dUMP from dCTP (dUTP route): step 1/2. Functionally, catalyzes the deamination of dCTP to dUTP. The sequence is that of dCTP deaminase from Alteromonas mediterranea (strain DSM 17117 / CIP 110805 / LMG 28347 / Deep ecotype).